The chain runs to 143 residues: Large ribosomal subunit protein uL13 (143 aa).

Belongs to the universal ribosomal protein uL13 family. As to quaternary structure, part of the 50S ribosomal subunit.

Its function is as follows. This protein is one of the early assembly proteins of the 50S ribosomal subunit, although it is not seen to bind rRNA by itself. It is important during the early stages of 50S assembly. This Dehalococcoides mccartyi (strain ATCC BAA-2266 / KCTC 15142 / 195) (Dehalococcoides ethenogenes (strain 195)) protein is Large ribosomal subunit protein uL13.